We begin with the raw amino-acid sequence, 415 residues long: Homoserine O-acetyltransferase (415 aa).

One can recognise an AB hydrolase-1 domain in the interval asparagine 47–proline 369. The Nucleophile role is filled by serine 155. Arginine 226 is a binding site for substrate. Catalysis depends on residues aspartate 329 and histidine 362. Aspartate 363 is a substrate binding site. A disordered region spans residues glycine 383–arginine 415.

Belongs to the AB hydrolase superfamily. MetX family. As to quaternary structure, homodimer.

The protein resides in the cytoplasm. The enzyme catalyses L-homoserine + acetyl-CoA = O-acetyl-L-homoserine + CoA. Its pathway is amino-acid biosynthesis; L-methionine biosynthesis via de novo pathway; O-acetyl-L-homoserine from L-homoserine: step 1/1. Transfers an acetyl group from acetyl-CoA to L-homoserine, forming acetyl-L-homoserine. The protein is Homoserine O-acetyltransferase of Haloferax volcanii (strain ATCC 29605 / DSM 3757 / JCM 8879 / NBRC 14742 / NCIMB 2012 / VKM B-1768 / DS2) (Halobacterium volcanii).